Here is a 165-residue protein sequence, read N- to C-terminus: Nicotine 6-hydroxylase small subunit (165 aa).

The 2Fe-2S ferredoxin-type domain maps to 10–86 (VEIDVEVNGR…GRSIRTVEDL (77 aa)). The [2Fe-2S] cluster site is built by Cys48, Cys53, Cys56, and Cys68.

As to quaternary structure, heterotrimer composed of a large subunit (NdhL), a medium subunit (NdhM) and a small subunit (NdhS). [2Fe-2S] cluster is required as a cofactor.

It localises to the cytoplasm. The catalysed reaction is (R)-nicotine + A + H2O = (R)-6-hydroxynicotine + AH2. It carries out the reaction (S)-nicotine + A + H2O = (S)-6-hydroxynicotine + AH2. It functions in the pathway alkaloid degradation; nicotine degradation; 6-hydroxypseudooxynicotine from nicotine (R-isomer route): step 1/2. It participates in alkaloid degradation; nicotine degradation; 6-hydroxypseudooxynicotine from nicotine (S-isomer route): step 1/2. With respect to regulation, nicotine dehydrogenase activity is inhibited by tungsten. Its function is as follows. Component of the nicotine 6-hydroxylase, which is involved in the degradation of nicotine. Catalyzes the hydroxylation of the pyridine ring at C6 to form 6-hydroxynicotine. Can use both L-nicotine and D-nicotine. This Paenarthrobacter nicotinovorans (Arthrobacter nicotinovorans) protein is Nicotine 6-hydroxylase small subunit.